Here is a 176-residue protein sequence, read N- to C-terminus: Ribosome maturation factor RimM (176 aa).

The PRC barrel domain occupies 99 to 173 (KEGEFHLVDL…WLLIKPPPGL (75 aa)).

This sequence belongs to the RimM family. In terms of assembly, binds ribosomal protein uS19.

The protein localises to the cytoplasm. In terms of biological role, an accessory protein needed during the final step in the assembly of 30S ribosomal subunit, possibly for assembly of the head region. Essential for efficient processing of 16S rRNA. May be needed both before and after RbfA during the maturation of 16S rRNA. It has affinity for free ribosomal 30S subunits but not for 70S ribosomes. The polypeptide is Ribosome maturation factor RimM (Prochlorococcus marinus (strain MIT 9211)).